Here is a 166-residue protein sequence, read N- to C-terminus: MTWTTPDLCDRYPDAMIAEPLFRHFGGRTAFAGPLATVRCFEDNSRVRELAATPGDGRVLVVDGQGSLKHALLGDQIAANAVANGWAGVLIHGCVRDVEILATLPLGVLALAACPRRTERRDLGDVDVPVNFAGVPFVPGHWLYADANGVLVAPQPLALDGAGGSI.

Residues 74–77 (GDQI) and R96 contribute to the substrate site. An a divalent metal cation-binding site is contributed by D97.

This sequence belongs to the class II aldolase/RraA-like family. Homotrimer. A divalent metal cation is required as a cofactor.

The enzyme catalyses 4-hydroxy-4-methyl-2-oxoglutarate = 2 pyruvate. It catalyses the reaction oxaloacetate + H(+) = pyruvate + CO2. Functionally, catalyzes the aldol cleavage of 4-hydroxy-4-methyl-2-oxoglutarate (HMG) into 2 molecules of pyruvate. Also contains a secondary oxaloacetate (OAA) decarboxylase activity due to the common pyruvate enolate transition state formed following C-C bond cleavage in the retro-aldol and decarboxylation reactions. In Xanthomonas axonopodis pv. citri (strain 306), this protein is Putative 4-hydroxy-4-methyl-2-oxoglutarate aldolase.